Consider the following 262-residue polypeptide: Small ribosomal subunit protein mS23 (262 aa).

Positions 211-262 (SGQSDEAPEGEGSDMSAGEYDMAVEELAGQGSIPNTPQSTVVPEGTSAPAHA) are disordered. A compositionally biased stretch (polar residues) spans 242 to 251 (SIPNTPQSTV).

This sequence belongs to the mitochondrion-specific ribosomal protein mS23 family. Component of the mitochondrial small ribosomal subunit.

The protein localises to the mitochondrion. This is Small ribosomal subunit protein mS23 (RSM25) from Phaeosphaeria nodorum (strain SN15 / ATCC MYA-4574 / FGSC 10173) (Glume blotch fungus).